The sequence spans 519 residues: Exodeoxyribonuclease 7 large subunit (519 aa).

Belongs to the XseA family. In terms of assembly, heterooligomer composed of large and small subunits.

The protein localises to the cytoplasm. The enzyme catalyses Exonucleolytic cleavage in either 5'- to 3'- or 3'- to 5'-direction to yield nucleoside 5'-phosphates.. Functionally, bidirectionally degrades single-stranded DNA into large acid-insoluble oligonucleotides, which are then degraded further into small acid-soluble oligonucleotides. This is Exodeoxyribonuclease 7 large subunit from Cereibacter sphaeroides (strain ATCC 17025 / ATH 2.4.3) (Rhodobacter sphaeroides).